A 185-amino-acid polypeptide reads, in one-letter code: ATP-dependent protease subunit HslV (185 aa).

Residue Thr-2 is part of the active site. Na(+) contacts are provided by Gly-157, Cys-160, and Thr-163.

This sequence belongs to the peptidase T1B family. HslV subfamily. As to quaternary structure, a double ring-shaped homohexamer of HslV is capped on each side by a ring-shaped HslU homohexamer. The assembly of the HslU/HslV complex is dependent on binding of ATP.

The protein localises to the cytoplasm. It carries out the reaction ATP-dependent cleavage of peptide bonds with broad specificity.. Allosterically activated by HslU binding. Its function is as follows. Protease subunit of a proteasome-like degradation complex believed to be a general protein degrading machinery. This chain is ATP-dependent protease subunit HslV, found in Idiomarina loihiensis (strain ATCC BAA-735 / DSM 15497 / L2-TR).